Reading from the N-terminus, the 533-residue chain is Beta-1,4 N-acetylgalactosaminyltransferase 1 (533 aa).

Topologically, residues 1–7 (MRLDRRA) are cytoplasmic. Residues 8–25 (LYALVLLLACASLGLLYA) form a helical; Signal-anchor for type II membrane protein membrane-spanning segment. The Lumenal portion of the chain corresponds to 26–533 (STRDAPGLPN…KHRLQCMTAE (508 aa)). N-linked (GlcNAc...) asparagine glycans are attached at residues asparagine 79 and asparagine 274. An intrachain disulfide couples cysteine 429 to cysteine 476.

The protein belongs to the glycosyltransferase 2 family. As to quaternary structure, homodimer; disulfide-linked. As to expression, strongly expressed in brain, testis, spleen, and to a lesser extent in liver.

It localises to the golgi apparatus membrane. It carries out the reaction a ganglioside GM3 (d18:1(4E)) + UDP-N-acetyl-alpha-D-galactosamine = a ganglioside GM2 (d18:1(4E)) + UDP + H(+). The catalysed reaction is a ganglioside GD3 (d18:1(4E)) + UDP-N-acetyl-alpha-D-galactosamine = a ganglioside GD2 (d18:1(4E)) + UDP + H(+). It catalyses the reaction a ganglioside GM3 + UDP-N-acetyl-alpha-D-galactosamine = a ganglioside GM2 + UDP + H(+). The enzyme catalyses a ganglioside GD3 + UDP-N-acetyl-alpha-D-galactosamine = a ganglioside GD2 + UDP + H(+). It carries out the reaction a ganglioside GD1a + UDP-N-acetyl-alpha-D-galactosamine = a ganglioside GalNAc-GD1a + UDP + H(+). The catalysed reaction is a ganglioside GT3 (d18:1(4E)) + UDP-N-acetyl-alpha-D-galactosamine = a ganglioside GT2 (d18:1(4E)) + UDP + H(+). It catalyses the reaction a beta-D-Gal-(1-&gt;4)-beta-D-Glc-(1&lt;-&gt;1)-Cer(d18:1(4E)) + UDP-N-acetyl-alpha-D-galactosamine = a ganglioside GA2 (d18:1(4E)) + UDP + H(+). The enzyme catalyses a neolactoside IV(3)-alpha-NeuGc-nLc4Cer + UDP-N-acetyl-alpha-D-galactosamine = a neolactoside IV(4)-beta-GalNAc-IV(3)-alpha-NeuGc-nLc4Cer + UDP + H(+). It participates in sphingolipid metabolism. Functionally, involved in the biosynthesis of gangliosides GM2, GD2, GT2 and GA2 from GM3, GD3, GT3 and GA3, respectively. The protein is Beta-1,4 N-acetylgalactosaminyltransferase 1 of Rattus norvegicus (Rat).